A 412-amino-acid chain; its full sequence is MKIYLVGGAVRDALLGLPVKDRDWVVVGSTPQEMLDAGYQQVGRDFPVFLHPQTHEEYALARTERKSGSGYTGFTCYAAPDVTLEDDLKRRDLTINALAQDDNGEIIDPYNGLGDLQNRLLRHVSPAFGEDPLRVLRVARFAARYAHLSFRIADETLALMREMTHAGELEHLTPERVWKETENALTTRNPQVFFQVLRDCGALRVLFPEIDALFGVPAPARWHPEIDTGIHTLMTLSMVAMLSPQVDVRFATLCHDLGKGLTPPELWPRHHGHGPAGVKLVEQLCQRLRVPNEIRDLARLVAEFHDLIHTFPMLNPKTIVKLFDSIDAWRKPQRVEQLALTSEADVRGRTGFESADYPQGRWLREAWEVAQSVPTKAVVEAGFKGVEIREELTRRRIAAVASWKEQRCPKPD.

ATP contacts are provided by Gly8 and Arg11. 2 residues coordinate CTP: Gly8 and Arg11. Mg(2+) contacts are provided by Asp21 and Asp23. Positions 91, 137, and 140 each coordinate ATP. Arg91, Arg137, and Arg140 together coordinate CTP. The 102-residue stretch at 228–329 (TGIHTLMTLS…VKLFDSIDAW (102 aa)) folds into the HD domain.

Belongs to the tRNA nucleotidyltransferase/poly(A) polymerase family. Bacterial CCA-adding enzyme type 1 subfamily. Monomer. Can also form homodimers and oligomers. Mg(2+) serves as cofactor. Requires Ni(2+) as cofactor.

The enzyme catalyses a tRNA precursor + 2 CTP + ATP = a tRNA with a 3' CCA end + 3 diphosphate. The catalysed reaction is a tRNA with a 3' CCA end + 2 CTP + ATP = a tRNA with a 3' CCACCA end + 3 diphosphate. Catalyzes the addition and repair of the essential 3'-terminal CCA sequence in tRNAs without using a nucleic acid template. Adds these three nucleotides in the order of C, C, and A to the tRNA nucleotide-73, using CTP and ATP as substrates and producing inorganic pyrophosphate. tRNA 3'-terminal CCA addition is required both for tRNA processing and repair. Also involved in tRNA surveillance by mediating tandem CCA addition to generate a CCACCA at the 3' terminus of unstable tRNAs. While stable tRNAs receive only 3'-terminal CCA, unstable tRNAs are marked with CCACCA and rapidly degraded. The polypeptide is Multifunctional CCA protein (Escherichia coli O127:H6 (strain E2348/69 / EPEC)).